A 53-amino-acid polypeptide reads, in one-letter code: UPF0391 membrane protein Meso_3392 (53 aa).

Helical transmembrane passes span 4 to 24 and 33 to 53; these read WILI…HSLA and ILIA…IAIA.

This sequence belongs to the UPF0391 family.

The protein localises to the cell membrane. The polypeptide is UPF0391 membrane protein Meso_3392 (Chelativorans sp. (strain BNC1)).